The primary structure comprises 83 residues: Small ribosomal subunit protein bS20 (83 aa).

The protein belongs to the bacterial ribosomal protein bS20 family.

Its function is as follows. Binds directly to 16S ribosomal RNA. This Staphylococcus haemolyticus (strain JCSC1435) protein is Small ribosomal subunit protein bS20.